A 427-amino-acid polypeptide reads, in one-letter code: Acetyl-CoA acetyltransferase, mitochondrial (427 aa).

A mitochondrion-targeting transit peptide spans 1–33 (MAVLAALLRGGARSRSPLLRRLVQEIRYVERSY). Position 66 is an N6-acetyllysine; alternate (lysine 66). The residue at position 66 (lysine 66) is an N6-succinyllysine; alternate. Lysine 78 carries the N6-succinyllysine modification. The Acyl-thioester intermediate role is filled by cysteine 126. Lysine 174, lysine 181, lysine 190, and lysine 202 each carry N6-acetyllysine; alternate. 4 positions are modified to N6-succinyllysine; alternate: lysine 174, lysine 181, lysine 190, and lysine 202. Tyrosine 219 lines the CoA pocket. Tyrosine 219 serves as a coordination point for K(+). Lysine 223 and lysine 230 each carry N6-acetyllysine; alternate. Lysine 223 and lysine 230 each carry N6-succinyllysine; alternate. Lysine 243 is subject to N6-succinyllysine. N6-acetyllysine occurs at positions 251 and 257. Residues 258–260 (RVD) and lysine 263 contribute to the CoA site. At lysine 263 the chain carries N6-acetyllysine; alternate. An N6-succinyllysine; alternate modification is found at lysine 263. Lysine 266 and lysine 268 each carry N6-succinyllysine. Lysine 273 is subject to N6-acetyllysine. Positions 280, 281, and 283 each coordinate K(+). A CoA-binding site is contributed by serine 284. N6-acetyllysine is present on lysine 338. Valine 381 contacts K(+). The active-site Proton donor/acceptor is cysteine 413.

The protein belongs to the thiolase-like superfamily. Thiolase family. As to quaternary structure, homotetramer. Post-translationally, succinylation at Lys-268, adjacent to a coenzyme A binding site. Desuccinylated by SIRT5.

The protein resides in the mitochondrion. It carries out the reaction 2 acetyl-CoA = acetoacetyl-CoA + CoA. The enzyme catalyses propanoyl-CoA + acetyl-CoA = 2-methyl-3-oxobutanoyl-CoA + CoA. It functions in the pathway lipid metabolism; fatty acid beta-oxidation. With respect to regulation, activated by potassium ions, but not sodium ions. Functionally, this is one of the enzymes that catalyzes the last step of the mitochondrial beta-oxidation pathway, an aerobic process breaking down fatty acids into acetyl-CoA. Using free coenzyme A/CoA, catalyzes the thiolytic cleavage of medium- to long-chain 3-oxoacyl-CoAs into acetyl-CoA and a fatty acyl-CoA shortened by two carbon atoms. The activity of the enzyme is reversible and it can also catalyze the condensation of two acetyl-CoA molecules into acetoacetyl-CoA. Thereby, it plays a major role in ketone body metabolism. The sequence is that of Acetyl-CoA acetyltransferase, mitochondrial (ACAT1) from Macaca fascicularis (Crab-eating macaque).